Consider the following 97-residue polypeptide: YcgL domain-containing protein CKO_01183 (97 aa).

Residues 1 to 85 form the YcgL domain; that stretch reads MFCVIYRSSK…PPEDLLKQHL (85 aa). The disordered stretch occupies residues 74-97; the sequence is PPPPEDLLKQHLSAPGENKPDAKS.

In Citrobacter koseri (strain ATCC BAA-895 / CDC 4225-83 / SGSC4696), this protein is YcgL domain-containing protein CKO_01183.